Consider the following 185-residue polypeptide: Dual specificity protein phosphatase 3 (185 aa).

A Tyrosine-protein phosphatase domain is found at 28-179 (QPCNEVVPRV…LCQLNDRLAK (152 aa)). Cysteine 124 acts as the Phosphocysteine intermediate in catalysis.

The protein belongs to the protein-tyrosine phosphatase family. Non-receptor class dual specificity subfamily. In terms of assembly, microtubule inner protein component of sperm flagellar doublet microtubules. Interacts with VRK3; this interaction activates DUSP3 phosphatase activity.

Its subcellular location is the nucleus. The protein resides in the cytoplasm. It is found in the cytoskeleton. The protein localises to the flagellum axoneme. It catalyses the reaction O-phospho-L-tyrosyl-[protein] + H2O = L-tyrosyl-[protein] + phosphate. The catalysed reaction is O-phospho-L-seryl-[protein] + H2O = L-seryl-[protein] + phosphate. It carries out the reaction O-phospho-L-threonyl-[protein] + H2O = L-threonyl-[protein] + phosphate. Its function is as follows. Shows activity both for tyrosine-protein phosphate and serine-protein phosphate, but displays a strong preference toward phosphotyrosines. Specifically dephosphorylates and inactivates ERK1 and ERK2. The polypeptide is Dual specificity protein phosphatase 3 (Dusp3) (Mus musculus (Mouse)).